The following is a 259-amino-acid chain: Imidazole glycerol phosphate synthase subunit HisF (259 aa).

Residues Asp-11 and Asp-130 contribute to the active site.

This sequence belongs to the HisA/HisF family. Heterodimer of HisH and HisF.

It localises to the cytoplasm. The catalysed reaction is 5-[(5-phospho-1-deoxy-D-ribulos-1-ylimino)methylamino]-1-(5-phospho-beta-D-ribosyl)imidazole-4-carboxamide + L-glutamine = D-erythro-1-(imidazol-4-yl)glycerol 3-phosphate + 5-amino-1-(5-phospho-beta-D-ribosyl)imidazole-4-carboxamide + L-glutamate + H(+). Its pathway is amino-acid biosynthesis; L-histidine biosynthesis; L-histidine from 5-phospho-alpha-D-ribose 1-diphosphate: step 5/9. Its function is as follows. IGPS catalyzes the conversion of PRFAR and glutamine to IGP, AICAR and glutamate. The HisF subunit catalyzes the cyclization activity that produces IGP and AICAR from PRFAR using the ammonia provided by the HisH subunit. In Variovorax paradoxus (strain S110), this protein is Imidazole glycerol phosphate synthase subunit HisF.